A 165-amino-acid polypeptide reads, in one-letter code: Cyclic pyranopterin monophosphate synthase (165 aa).

Residues Leu-76–His-78 and Met-114–Glu-115 contribute to the substrate site. Asp-129 is a catalytic residue.

This sequence belongs to the MoaC family. In terms of assembly, homohexamer; trimer of dimers.

It catalyses the reaction (8S)-3',8-cyclo-7,8-dihydroguanosine 5'-triphosphate = cyclic pyranopterin phosphate + diphosphate. It participates in cofactor biosynthesis; molybdopterin biosynthesis. Its function is as follows. Catalyzes the conversion of (8S)-3',8-cyclo-7,8-dihydroguanosine 5'-triphosphate to cyclic pyranopterin monophosphate (cPMP). The chain is Cyclic pyranopterin monophosphate synthase from Brucella abortus (strain 2308).